Reading from the N-terminus, the 223-residue chain is Immediate early response gene 2 protein (223 aa).

M1 is subject to N-acetylmethionine. The interval 63–172 is disordered; it reads AALPSDPRLH…PPAQAEGAFP (110 aa). Residues 69 to 78 are compositionally biased toward basic and acidic residues; that stretch reads PRLHPPREAE. Residues 125–138 are compositionally biased toward low complexity; sequence SSLSDGGDAGLVPS.

Belongs to the IER family. In terms of tissue distribution, expressed in activated T-cells (at protein level). Expression increases in metastatic tumor cells (at protein level).

It is found in the cytoplasm. The protein resides in the nucleus. DNA-binding protein that seems to act as a transcription factor. Involved in the regulation of neuronal differentiation, acts upon JNK-signaling pathway activation and plays a role in neurite outgrowth in hippocampal cells. May mediate with FIBP FGF-signaling in the establishment of laterality in the embryo. Promotes cell motility, seems to stimulate tumor metastasis. The polypeptide is Immediate early response gene 2 protein (Homo sapiens (Human)).